Reading from the N-terminus, the 45-residue chain is Host translation inhibitor E66L (45 aa).

Belongs to the asfivirus E66L family.

The protein localises to the host endoplasmic reticulum. In terms of biological role, inhibits host protein translation, probably through the EIF2AK2/EIF2S1 signaling pathway. Promotes cell retention in the G0/G1 phase. The protein is Host translation inhibitor E66L of Ornithodoros (relapsing fever ticks).